The primary structure comprises 88 residues: Cell division topological specificity factor (88 aa).

Belongs to the MinE family.

Prevents the cell division inhibition by proteins MinC and MinD at internal division sites while permitting inhibition at polar sites. This ensures cell division at the proper site by restricting the formation of a division septum at the midpoint of the long axis of the cell. The polypeptide is Cell division topological specificity factor (Clostridium botulinum (strain Alaska E43 / Type E3)).